The sequence spans 337 residues: Equatorin (337 aa).

The N-terminal stretch at 1–20 (MDFILLIILSGVFLPDIISL) is a signal peptide. The Lumenal segment spans residues 21–183 (QPIVGQEPGV…LSELEEIKLK (163 aa)). The segment at 110–130 (SKPTASGEEEKPSESSRKTST) is disordered. A compositionally biased stretch (basic and acidic residues) spans 117-126 (EEEKPSESSR). N-linked (GlcNAc...) asparagine glycosylation is present at Asn-145. Residues 184–204 (LMLGISLMTLVLLIPLLIFCF) traverse the membrane as a helical segment. The Cytoplasmic portion of the chain corresponds to 205 to 337 (ATLYKLRHLR…LLNKEGSPSN (133 aa)). The tract at residues 259–283 (SSEMRRSRTRRSKSKPMDFSAGSNQ) is disordered. Ser-336 is subject to Phosphoserine.

In terms of assembly, interacts with SNAP25. In terms of processing, highly N- and O-glycosylated; contains sialic acid. MN9 epitope is O-glycosylated. In terms of tissue distribution, sperm specific, including germ cells (at protein level).

The protein resides in the cytoplasmic vesicle. It is found in the secretory vesicle. Its subcellular location is the acrosome membrane. The protein localises to the acrosome inner membrane. It localises to the acrosome outer membrane. The protein resides in the nucleus. It is found in the cytoplasm. In terms of biological role, acrosomal membrane-anchored protein involved in the process of fertilization and in acrosome biogenesis. This chain is Equatorin (Eqtn), found in Mus musculus (Mouse).